Reading from the N-terminus, the 339-residue chain is Protein FAM76B (339 aa).

Ala2 is modified (N-acetylalanine). A phosphoserine mark is found at Ser22 and Ser148. The segment at 144 to 243 (EQRKSLGSSH…INQSADSGGT (100 aa)) is disordered. Residues 148-160 (SLGSSHSNSSSSS) are compositionally biased toward low complexity. Over residues 167 to 189 (HHPKHHHHHHHHHHRHSSSHHKI) the composition is skewed to basic residues. The residue at position 193 (Ser193) is a Phosphoserine. Thr215 carries the phosphothreonine modification. Residues 215-224 (TPKKKPKLES) show a composition bias toward basic and acidic residues. Residues 228–243 (NGDSSSINQSADSGGT) show a composition bias toward polar residues. A coiled-coil region spans residues 248 to 328 (LISQLKEEVM…QVAALSKGKK (81 aa)).

The protein belongs to the FAM76 family. As to quaternary structure, interacts with HNRNPA2B1 (via C-terminus); the interaction results in retention of HNRNPA2B1 in the nucleus and inhibition of the NF-kappa-B-mediated inflammatory pathway.

The protein localises to the nucleus speckle. Negatively regulates the NF-kappa-B-mediated inflammatory pathway by preventing the translocation of HNRNPA2B1 from the nucleus to the cytoplasm. Inhibits the PI3K/Akt/NF-kappa-B pathway-mediated polarization of M1 macrophages by binding to and stabilizing PIK3CD mRNA, resulting in increased levels of PIK3CD protein and increased levels of phosphorylated downstream target AKT which leads to decreased NF-kappa-B signaling. This chain is Protein FAM76B (FAM76B), found in Homo sapiens (Human).